The primary structure comprises 469 residues: UDP-N-acetylmuramate--L-alanine ligase (469 aa).

Residue 112–118 (GTHGKTT) participates in ATP binding.

The protein belongs to the MurCDEF family.

It localises to the cytoplasm. It carries out the reaction UDP-N-acetyl-alpha-D-muramate + L-alanine + ATP = UDP-N-acetyl-alpha-D-muramoyl-L-alanine + ADP + phosphate + H(+). Its pathway is cell wall biogenesis; peptidoglycan biosynthesis. Functionally, cell wall formation. This is UDP-N-acetylmuramate--L-alanine ligase from Herminiimonas arsenicoxydans.